The primary structure comprises 192 residues: Ribose 1,5-bisphosphate phosphokinase PhnN (192 aa).

15-22 is an ATP binding site; the sequence is GPSGAGKD.

The protein belongs to the ribose 1,5-bisphosphokinase family.

It carries out the reaction alpha-D-ribose 1,5-bisphosphate + ATP = 5-phospho-alpha-D-ribose 1-diphosphate + ADP. The protein operates within metabolic intermediate biosynthesis; 5-phospho-alpha-D-ribose 1-diphosphate biosynthesis; 5-phospho-alpha-D-ribose 1-diphosphate from D-ribose 5-phosphate (route II): step 3/3. In terms of biological role, catalyzes the phosphorylation of ribose 1,5-bisphosphate to 5-phospho-D-ribosyl alpha-1-diphosphate (PRPP). This chain is Ribose 1,5-bisphosphate phosphokinase PhnN, found in Brucella melitensis biotype 2 (strain ATCC 23457).